The sequence spans 599 residues: RING finger protein unkempt (599 aa).

C3H1-type zinc fingers lie at residues 71 to 100, 111 to 141, 194 to 220, 230 to 264, and 272 to 300; these read YSADNYCTKYDETTGICPEGDECPYLHRTA, YYKTCMCVHDTDSRGYCVKNGLHCAFAHGMQ, NYKTEPCKRPPRLCRQGYACPQYHNSK, KYRSTPCPNVKHGEEWGEPGNCEAGDNCQYCHTRT, and IYKSTKCNDVQQAGYCPRSVFCAFAHVEP. At Ser411 the chain carries Phosphoserine. An RING-type zinc finger spans residues 556–591; the sequence is CMKCEENNRTVTLEPCNHLSICNTCAESVTECPYCQ.

This sequence belongs to the unkempt family. As to expression, ubiquitous in most somatic tissues from syncytial embryo through to embryo stage 15. Expression becomes restricted predominantly to the CNS at stages 16 and 17.

It localises to the cytoplasm. Essential for late larval/early pupal development. This chain is RING finger protein unkempt (unk), found in Drosophila melanogaster (Fruit fly).